A 92-amino-acid chain; its full sequence is Small ribosomal subunit protein uS19 (92 aa).

It belongs to the universal ribosomal protein uS19 family.

Protein S19 forms a complex with S13 that binds strongly to the 16S ribosomal RNA. This Lachnoclostridium phytofermentans (strain ATCC 700394 / DSM 18823 / ISDg) (Clostridium phytofermentans) protein is Small ribosomal subunit protein uS19.